Consider the following 346-residue polypeptide: Probable alpha-1,2-galactosyltransferase gmh2 (346 aa).

Residues Met1–Arg11 lie on the Cytoplasmic side of the membrane. Residues Phe12 to Tyr32 form a helical; Signal-anchor for type II membrane protein membrane-spanning segment. Over Phe33–Asp346 the chain is Lumenal. N-linked (GlcNAc...) asparagine glycans are attached at residues Asn64, Asn142, and Asn224.

Belongs to the glycosyltransferase 34 family.

The protein resides in the golgi apparatus membrane. This is Probable alpha-1,2-galactosyltransferase gmh2 (gmh2) from Schizosaccharomyces pombe (strain 972 / ATCC 24843) (Fission yeast).